The primary structure comprises 596 residues: ATP-dependent lipid A-core flippase (596 aa).

6 helical membrane passes run 34–54 (VWVLVAGVLAMAAVAATEAGI), 80–100 (AAVVGLALARAIAQYASGYLL), 138–158 (AVVFEVNQVLSVLMGVTITLV), 164–184 (VVFLLGYLFYLNWRLTLIVAI), 263–283 (QPLTQFLASIALAVVLTIAVV), and 292–312 (VGGFVAFVTAMLLIISPLKHL). Residues 38–321 (VAGVLAMAAV…LMDVNQPLQR (284 aa)) enclose the ABC transmembrane type-1 domain. Residues 353–589 (IEFSHVSFSY…GGLYAHLHRI (237 aa)) enclose the ABC transporter domain. Position 389 to 396 (389 to 396 (GPSGSGKT)) interacts with ATP.

The protein belongs to the ABC transporter superfamily. Lipid exporter (TC 3.A.1.106) family. In terms of assembly, homodimer.

The protein localises to the cell inner membrane. It carries out the reaction ATP + H2O + lipid A-core oligosaccharideSide 1 = ADP + phosphate + lipid A-core oligosaccharideSide 2.. In terms of biological role, involved in lipopolysaccharide (LPS) biosynthesis. Translocates lipid A-core from the inner to the outer leaflet of the inner membrane. Transmembrane domains (TMD) form a pore in the inner membrane and the ATP-binding domain (NBD) is responsible for energy generation. In Burkholderia mallei (strain ATCC 23344), this protein is ATP-dependent lipid A-core flippase.